The sequence spans 129 residues: Small ribosomal subunit protein uS11 (129 aa).

A disordered region spans residues 107 to 129; that stretch reads IEDVTPVPHDSIRGKGGRRGRRV.

The protein belongs to the universal ribosomal protein uS11 family. Part of the 30S ribosomal subunit.

Its function is as follows. Located on the platform of the 30S subunit. This Methanoculleus marisnigri (strain ATCC 35101 / DSM 1498 / JR1) protein is Small ribosomal subunit protein uS11.